Consider the following 435-residue polypeptide: tRNA modification GTPase MnmE (435 aa).

The (6S)-5-formyl-5,6,7,8-tetrahydrofolate site is built by R20, E77, and K117. Positions 214 to 359 constitute a TrmE-type G domain; that stretch reads GLKIVIAGAP…FIKKLESFCH (146 aa). GTP is bound by residues 224 to 229, 243 to 249, and 268 to 271; these read NSGKSS, TEEAGTT, and DTAG. Mg(2+) is bound by residues S228 and T249. K435 contacts (6S)-5-formyl-5,6,7,8-tetrahydrofolate.

This sequence belongs to the TRAFAC class TrmE-Era-EngA-EngB-Septin-like GTPase superfamily. TrmE GTPase family. Homodimer. Heterotetramer of two MnmE and two MnmG subunits. Requires K(+) as cofactor.

The protein resides in the cytoplasm. Exhibits a very high intrinsic GTPase hydrolysis rate. Involved in the addition of a carboxymethylaminomethyl (cmnm) group at the wobble position (U34) of certain tRNAs, forming tRNA-cmnm(5)s(2)U34. This is tRNA modification GTPase MnmE from Bartonella tribocorum (strain CIP 105476 / IBS 506).